The following is a 452-amino-acid chain: MAYRSCVVGFSSLSGCEMTPAGSPQPGTSGWGSCGLPGPGFSSRSLTSCRPAGTIPKVTVNPSLLVPLDLKVDPAVQQQKNQEKEEMKALNDKFASLIGKVQALEQRNQLLETRWSFLQGQGSATFDLSHHYETFQGRLQEELRKVSQERGQLEANLLQVLEKVEEFRVRYEDEISKRTDLEFTFVQLKKDLDAECLRRTELETKLKGLQGFLELMRTVYEQELKDLTAQVKDVSVTVGLDSRCHIDLSGIVEEVKAQYDAIAARSLEEAEAYSRSQLEERAARSAEFGNSLQSSRCEIADLNVRIQKLRSQIVSVKSHCLKLEENIKVAEEQGELAFQDAKDKMAQLENALQKAKQDMARQLREYQDLMNTKLALDIEIATYHKLMEGEESRMDLPSATVVSTVKSGCRTTASKSGLTKTSSRKKKNRRGPVIKITEMSEKYLSQESEASE.

Residues 1 to 82 (MAYRSCVVGF…DPAVQQQKNQ (82 aa)) are head. Serine 45 carries the post-translational modification Phosphoserine. The tract at residues 82–118 (QEKEEMKALNDKFASLIGKVQALEQRNQLLETRWSFL) is coil 1A. The region spanning 83–394 (EKEEMKALND…KLMEGEESRM (312 aa)) is the IF rod domain. Positions 119-135 (QGQGSATFDLSHHYETF) are linker 1. Positions 136–227 (QGRLQEELRK…TVYEQELKDL (92 aa)) are coil 1B. Residues 228 to 251 (TAQVKDVSVTVGLDSRCHIDLSGI) are linker 12. The coil 2 stretch occupies residues 252–390 (VEEVKAQYDA…ATYHKLMEGE (139 aa)). The segment at 391 to 452 (ESRMDLPSAT…YLSQESEASE (62 aa)) is tail. The disordered stretch occupies residues 412–452 (TASKSGLTKTSSRKKKNRRGPVIKITEMSEKYLSQESEASE). The span at 422–432 (SSRKKKNRRGP) shows a compositional bias: basic residues. Residues 443–452 (YLSQESEASE) are compositionally biased toward polar residues.

The protein belongs to the intermediate filament family. In terms of assembly, heterotetramer of two type I and two type II keratins.

The polypeptide is Keratin, type II cytoskeletal 80 (Krt80) (Mus musculus (Mouse)).